The chain runs to 91 residues: Progonadoliberin-1 (91 aa).

Residues 1–21 form the signal peptide; that stretch reads MVVKTWMPWLLVSSVLSQGCC. Glutamine 22 is modified (pyrrolidone carboxylic acid). Glycine 31 bears the Glycine amide mark.

It belongs to the GnRH family. In terms of tissue distribution, expressed in the cell bodies of a cluster of neurons in the preoptic region.

Its subcellular location is the secreted. Stimulates the secretion of gonadotropins. This chain is Progonadoliberin-1 (gnrh1), found in Oryzias latipes (Japanese rice fish).